A 233-amino-acid polypeptide reads, in one-letter code: Leucyl/phenylalanyl-tRNA--protein transferase (233 aa).

Belongs to the L/F-transferase family.

The protein localises to the cytoplasm. The catalysed reaction is N-terminal L-lysyl-[protein] + L-leucyl-tRNA(Leu) = N-terminal L-leucyl-L-lysyl-[protein] + tRNA(Leu) + H(+). It catalyses the reaction N-terminal L-arginyl-[protein] + L-leucyl-tRNA(Leu) = N-terminal L-leucyl-L-arginyl-[protein] + tRNA(Leu) + H(+). It carries out the reaction L-phenylalanyl-tRNA(Phe) + an N-terminal L-alpha-aminoacyl-[protein] = an N-terminal L-phenylalanyl-L-alpha-aminoacyl-[protein] + tRNA(Phe). In terms of biological role, functions in the N-end rule pathway of protein degradation where it conjugates Leu, Phe and, less efficiently, Met from aminoacyl-tRNAs to the N-termini of proteins containing an N-terminal arginine or lysine. The sequence is that of Leucyl/phenylalanyl-tRNA--protein transferase from Chromobacterium violaceum (strain ATCC 12472 / DSM 30191 / JCM 1249 / CCUG 213 / NBRC 12614 / NCIMB 9131 / NCTC 9757 / MK).